The chain runs to 279 residues: Phosphatidylglycerol--prolipoprotein diacylglyceryl transferase (279 aa).

Transmembrane regions (helical) follow at residues 22–42 (WYGI…QAAL), 52–72 (LIDI…IYFV), and 89–109 (IWHG…SGII). Residue arginine 137 participates in a 1,2-diacyl-sn-glycero-3-phospho-(1'-sn-glycerol) binding. 2 helical membrane passes run 203–223 (LGET…FVEA) and 235–255 (IRVA…FVIY).

This sequence belongs to the Lgt family.

It is found in the cell membrane. The catalysed reaction is L-cysteinyl-[prolipoprotein] + a 1,2-diacyl-sn-glycero-3-phospho-(1'-sn-glycerol) = an S-1,2-diacyl-sn-glyceryl-L-cysteinyl-[prolipoprotein] + sn-glycerol 1-phosphate + H(+). It participates in protein modification; lipoprotein biosynthesis (diacylglyceryl transfer). Functionally, catalyzes the transfer of the diacylglyceryl group from phosphatidylglycerol to the sulfhydryl group of the N-terminal cysteine of a prolipoprotein, the first step in the formation of mature lipoproteins. The chain is Phosphatidylglycerol--prolipoprotein diacylglyceryl transferase from Staphylococcus epidermidis (strain ATCC 35984 / DSM 28319 / BCRC 17069 / CCUG 31568 / BM 3577 / RP62A).